The primary structure comprises 218 residues: Large ribosomal subunit protein bL25 (218 aa).

The disordered stretch occupies residues 178-218 (VTPPTVTEDPDATEEDNTTAESVEATGERNDDNLDRPGRVE). Over residues 185-195 (EDPDATEEDNT) the composition is skewed to acidic residues. Basic and acidic residues predominate over residues 203 to 218 (TGERNDDNLDRPGRVE).

Belongs to the bacterial ribosomal protein bL25 family. CTC subfamily. In terms of assembly, part of the 50S ribosomal subunit; part of the 5S rRNA/L5/L18/L25 subcomplex. Contacts the 5S rRNA. Binds to the 5S rRNA independently of L5 and L18.

This is one of the proteins that binds to the 5S RNA in the ribosome where it forms part of the central protuberance. In Shouchella clausii (strain KSM-K16) (Alkalihalobacillus clausii), this protein is Large ribosomal subunit protein bL25.